The sequence spans 880 residues: Interference hedgehog (880 aa).

An N-terminal signal peptide occupies residues 1–20 (MTLLTSSLLLFSLLTSRLEA). The Extracellular portion of the chain corresponds to 21 to 703 (IPVLEKSPAH…ETFNMSPMLT (683 aa)). 4 Ig-like C2-type domains span residues 45-142 (PGVR…TARL), 155-232 (PESP…ERIQ), 252-340 (PHLL…YIKV), and 346-432 (PQIV…LQVN). Disulfide bonds link Cys-68/Cys-126, Cys-173/Cys-220, Cys-276/Cys-324, and Cys-367/Cys-414. N-linked (GlcNAc...) asparagine glycosylation is found at Asn-102 and Asn-209. Positions 429-467 (LQVNPKQIQEPRESGGTHRPNPNQGSKHKQMYPPTPPNV) are disordered. Fibronectin type-III domains lie at 461-567 (PPTP…LQPG) and 575-670 (VPEL…TQRP). An N-linked (GlcNAc...) asparagine glycan is attached at Asn-466. Residues Arg-497, Lys-501, Lys-503, and Arg-541 each coordinate heparin. An N-linked (GlcNAc...) asparagine glycan is attached at Asn-557. The disordered stretch occupies residues 662 to 692 (LKQGRTQRPKTSTTEEPTLQMGDRDTTTPSH). Over residues 665-678 (GRTQRPKTSTTEEP) the composition is skewed to polar residues. A glycan (N-linked (GlcNAc...) asparagine) is linked at Asn-693. Residues 704–724 (GTIGGGAVLILLLISTCLCVC) traverse the membrane as a helical segment. At 725-880 (RRRNSRSRGN…SSGSLNSVGV (156 aa)) the chain is on the cytoplasmic side. Disordered stretches follow at residues 728–762 (NSRS…QRQR) and 775–880 (QQQQ…SVGV). 2 stretches are compositionally biased toward low complexity: residues 823 to 837 (RAGG…NNNN) and 864 to 880 (SSRS…SVGV).

This sequence belongs to the immunoglobulin superfamily. IHOG family. Homodimer. Heterotetramer; 2 iHog chains bind 2 hh chains when facilitated by heparin, heparin is required to promote high-affinity interactions between hh and iHog.

Its subcellular location is the membrane. Functionally, mediates response to the active Hedgehog (Hh) protein signal in embryos, functioning upstream or at the level of patched (ptc). This Drosophila simulans (Fruit fly) protein is Interference hedgehog.